We begin with the raw amino-acid sequence, 77 residues long: MFLRLIDDNGIVLNSILWLLVMIFFFVLAMTFIKLIQLCFTCHYFFSRTLYQPVYKIFLAYQDYMQIAPVPAEVLNV.

The Virion surface portion of the chain corresponds to 1 to 15 (MFLRLIDDNGIVLNS). Residues 16-36 (ILWLLVMIFFFVLAMTFIKLI) form a helical membrane-spanning segment. Residues 37-77 (QLCFTCHYFFSRTLYQPVYKIFLAYQDYMQIAPVPAEVLNV) lie on the Intravirion side of the membrane.

This sequence belongs to the alphacoronaviruses E protein family. Homopentamer. Interacts with membrane protein M in the budding compartment of the host cell, which is located between endoplasmic reticulum and the Golgi complex. Interacts with Nucleoprotein.

The protein localises to the host Golgi apparatus membrane. Plays a central role in virus morphogenesis and assembly. Acts as a viroporin and self-assembles in host membranes forming pentameric protein-lipid pores that allow ion transport. Also plays a role in the induction of apoptosis. The protein is Envelope small membrane protein of Homo sapiens (Human).